Here is a 226-residue protein sequence, read N- to C-terminus: CD9 antigen (226 aa).

Over 1-12 (MPVKGGTKCIKY) the chain is Cytoplasmic. Cys9 carries S-palmitoyl cysteine lipidation. The helical transmembrane segment at 13 to 33 (LLFGFNFIFWLAGIAVLAVGL) threads the bilayer. The Extracellular segment spans residues 34–53 (WLRFDSQTKSIFEQDSQPSS). A helical membrane pass occupies residues 54 to 74 (FYTGVYILIGAGALMMLVGFL). The Cytoplasmic portion of the chain corresponds to 75–85 (GCCGAVQESQC). 3 S-palmitoyl cysteine lipidation sites follow: Cys76, Cys77, and Cys85. A helical transmembrane segment spans residues 86-109 (MLGLFFGFLLVIFAIEIAAAIWGY). Residues 110–193 (SHKDEVIQEV…KEVFHNKFHI (84 aa)) lie on the Extracellular side of the membrane. 2 cysteine pairs are disulfide-bonded: Cys150-Cys179 and Cys151-Cys165. Residues 194 to 219 (IGAVGIGIAVVMIFGMIFSMILCCAI) traverse the membrane as a helical segment. 2 S-palmitoyl cysteine lipidation sites follow: Cys216 and Cys217. At 220–226 (RRSREMV) the chain is on the cytoplasmic side.

The protein belongs to the tetraspanin (TM4SF) family. As to quaternary structure, forms both disulfide-linked homodimers and higher homooligomers as well as heterooligomers with other members of the tetraspanin family. Interacts (via the second extracellular domain) with integrin ITGAV:ITGB3. Interacts with integrin ITGA6:ITGB1; interaction takes place in oocytes and is involved in sperm-egg fusion. Part of integrin-tetraspanin complexes composed of CD81, beta-1 and beta-2 integrins in the membrane of monocyte/macrophages. Interacts with CD63; identified in a complex with CD63 and ITGB3. Associates with CR2/CD21 and with PTGFRN/CD9P1. Part of a complex composed of CD9, CD81, PTGFRN and IGSF8. Interacts directly with IGSF8. Interacts with PDPN; this interaction is homophilic and attenuates platelet aggregation and pulmonary metastasis induced by PDPN. Interacts (on T cell side) with CD81 at immunological synapses between antigen-presenting cells and T cells. In terms of processing, palmitoylated at a low, basal level in unstimulated platelets. The level of palmitoylation increases when platelets are activated by thrombin (in vitro). The protein exists in three forms with molecular masses between 22 and 27 kDa, and is known to carry covalently linked fatty acids. Palmitoylation by ZDHHC2 regulates CD9 expression, association with other tetraspanin family proteins and function in cell adhesion.

It is found in the cell membrane. It localises to the membrane. The protein localises to the secreted. Its subcellular location is the extracellular exosome. Integral membrane protein associated with integrins, which regulates different processes, such as sperm-egg fusion, platelet activation and aggregation, and cell adhesion. Present at the cell surface of oocytes and plays a key role in sperm-egg fusion, possibly by organizing multiprotein complexes and the morphology of the membrane required for the fusion. In myoblasts, associates with CD81 and PTGFRN and inhibits myotube fusion during muscle regeneration. In macrophages, associates with CD81 and beta-1 and beta-2 integrins, and prevents macrophage fusion into multinucleated giant cells specialized in ingesting complement-opsonized large particles. Also prevents the fusion between mononuclear cell progenitors into osteoclasts in charge of bone resorption. Acts as a receptor for PSG17. Involved in platelet activation and aggregation. Regulates paranodal junction formation. Involved in cell adhesion, cell motility and tumor metastasis. This is CD9 antigen from Felis catus (Cat).